A 311-amino-acid polypeptide reads, in one-letter code: Probable manganese-dependent inorganic pyrophosphatase (311 aa).

Mn(2+)-binding residues include His-9, Asp-13, Asp-15, Asp-75, His-97, and Asp-149.

The protein belongs to the PPase class C family. The cofactor is Mn(2+).

Its subcellular location is the cytoplasm. The catalysed reaction is diphosphate + H2O = 2 phosphate + H(+). The polypeptide is Probable manganese-dependent inorganic pyrophosphatase (Shouchella clausii (strain KSM-K16) (Alkalihalobacillus clausii)).